Here is a 453-residue protein sequence, read N- to C-terminus: Sensor histidine kinase CpxA (453 aa).

Over 1–4 (MTAR) the chain is Cytoplasmic. The chain crosses the membrane as a helical span at residues 5 to 25 (IFAIFWLTLALVLMLVLMLPK). Residues 26 to 159 (LDSRQMTELL…SDFINLLFDR (134 aa)) are Periplasmic-facing. Residues 160–180 (PLLLLIVTMLVSAPLLLWLAW) traverse the membrane as a helical segment. The 54-residue stretch at 180 to 233 (WSLAKPARKLKNAADEVAQGNLRQHPELEAGPQEFLAAGASFNQMVTALERMMT) folds into the HAMP domain. The Cytoplasmic portion of the chain corresponds to 181–453 (SLAKPARKLK…TIWLPLYKRT (273 aa)). The 211-residue stretch at 241–451 (DISHELRTPL…RLTIWLPLYK (211 aa)) folds into the Histidine kinase domain. His-244 (nucleophile) is an active-site residue. A Phosphohistidine; by autocatalysis modification is found at His-244. Residues 244–247 (HELR), 355–360 (RNALRY), Asp-382, 401–402 (RT), and 412–417 (GTGLGL) contribute to the ATP site.

In terms of assembly, interacts with cognate response regulator CpxR.

The protein localises to the cell inner membrane. It carries out the reaction ATP + protein L-histidine = ADP + protein N-phospho-L-histidine.. With respect to regulation, the two-component system is activated by envelope stress such as overexpression of some (misfolded) periplasmic proteins. Its function is as follows. Histidine kinase member of the two-component regulatory system CpxA/CpxR which responds to envelope stress response by activating or, in some cases, repressing expression of downstream genes. Activates CpxR by phosphorylation. This is Sensor histidine kinase CpxA from Klebsiella pneumoniae subsp. pneumoniae (strain HS11286).